Reading from the N-terminus, the 331-residue chain is Small ribosomal subunit protein uS2 (331 aa).

It belongs to the universal ribosomal protein uS2 family.

The protein is Small ribosomal subunit protein uS2 of Rhodopseudomonas palustris (strain ATCC BAA-98 / CGA009).